An 870-amino-acid chain; its full sequence is MKEEKNITPMLAQYHKIKDQYPDALVLYRLGDFYEMFYEDAHTGARELNIVLTKKKVGKDRYIPMCGIPFHSADSYITRLVSKGYKVAICEQLEDASKAKGIVKRDVIRVLTPGTYFENEKLKSALLGIYQERGRFYIAYLDLSTGEFTGGSLNRDELISFIGKFQPKEIVVQEGYDFSDLRSQFKSIFFSQLPEDYFSEDTHSEFLGFFKTGHISAFGFDTEEQNVIYPLSAVWKYAKVTQKSFLPFISTPKPYREDSYVRLDYSAQKHLEIVSPNEGNIPLLRVMDRTLTGMGRRKLRFFLLHPLKNSKEIIKRQNAVTELVENTELREKIRDILDQIFDIERLISKISSNTSTPRDLVGLRESLKKVSKLKEISKEIKSDLLKESFERIEDYSWLIEKLDRYLEDDPPIHLKEGGLIKKGVDKDLDELKEIKEKGNEWLKSYQEKLRKETGIQSLKIGFNKVMGYYIEVTKPNLKLVPDHFRRRQTLSNAERFITDELQSFEEKILSADEKIKALEYEIFMRIREEVAFLSDRIGKTAQQVGMIDAIQSLAQIAVEKGWTKPDIHDGYEIEIKEGYHPVIKEFMPDFVPNNLKMNRNSYFHIITGPNMAGKSTFIRQSAIIILLAQTGSYIPAKKGKIGVVDAIFTRIGSGDALAKGLSTFMVEMLEMANIVNNATERSFIVLDEVGRGTSTYDGLSIGWAISEYLAEKVKVKTLFATHYHELTQLEREIKGVKNFHMDIFEDGENIKFLYRVKEGFSNKSYGVHVAKLAGIKEQIIKRAYEILYYFEEQRDKKLEEDIYSLKQKENSYLNEINELPLFKEIEDIEKDEYRQILEEIESIDIGSITPVEALVFLNDLKKKIKRLKES.

Residue 608 to 615 (GPNMAGKS) participates in ATP binding.

This sequence belongs to the DNA mismatch repair MutS family.

Functionally, this protein is involved in the repair of mismatches in DNA. It is possible that it carries out the mismatch recognition step. This protein has a weak ATPase activity. The sequence is that of DNA mismatch repair protein MutS from Persephonella marina (strain DSM 14350 / EX-H1).